The sequence spans 885 residues: Alanine--tRNA ligase (885 aa).

Positions 574, 578, 676, and 680 each coordinate Zn(2+).

Belongs to the class-II aminoacyl-tRNA synthetase family. The cofactor is Zn(2+).

It is found in the cytoplasm. The enzyme catalyses tRNA(Ala) + L-alanine + ATP = L-alanyl-tRNA(Ala) + AMP + diphosphate. Its function is as follows. Catalyzes the attachment of alanine to tRNA(Ala) in a two-step reaction: alanine is first activated by ATP to form Ala-AMP and then transferred to the acceptor end of tRNA(Ala). Also edits incorrectly charged Ser-tRNA(Ala) and Gly-tRNA(Ala) via its editing domain. This is Alanine--tRNA ligase from Syntrophobacter fumaroxidans (strain DSM 10017 / MPOB).